The sequence spans 369 residues: GTPase Obg (369 aa).

One can recognise an Obg domain in the interval 1–159 (MKFIDEAKIE…RELRLELKVL (159 aa)). Residues 128-148 (IHFKSSTNRAPRQKSEGKEGE) are disordered. An OBG-type G domain is found at 160-333 (ADIGLLGMPN…LVTEIYEYIA (174 aa)). Residues 166-173 (GMPNAGKS), 191-195 (FTTLH), 213-216 (DIPG), 283-286 (NKLD), and 314-316 (SAL) each bind GTP. The Mg(2+) site is built by serine 173 and threonine 193.

The protein belongs to the TRAFAC class OBG-HflX-like GTPase superfamily. OBG GTPase family. Monomer. The cofactor is Mg(2+).

The protein resides in the cytoplasm. An essential GTPase which binds GTP, GDP and possibly (p)ppGpp with moderate affinity, with high nucleotide exchange rates and a fairly low GTP hydrolysis rate. Plays a role in control of the cell cycle, stress response, ribosome biogenesis and in those bacteria that undergo differentiation, in morphogenesis control. The protein is GTPase Obg of Janthinobacterium sp. (strain Marseille) (Minibacterium massiliensis).